Reading from the N-terminus, the 582-residue chain is Hydrogen peroxide stress regulator 1 (582 aa).

Disordered stretches follow at residues 24–55, 107–154, 347–366, and 375–422; these read SPFAPAQSSSPLPSNSCREYSLPSHPSTHNSS, YPSA…GISK, TSYNDTPQQSVTGSYNSGET, and NTSG…GGKS. Polar residues predominate over residues 107-125; it reads YPSASFSTSQHPSQVYNDG. Residues 126 to 143 show a composition bias toward low complexity; that stretch reads STLNSNNTTQQLNNNNGF. A compositionally biased stretch (polar residues) spans 375-392; that stretch reads NTSGRSPNSMEATEQIGT. A C2H2-type 1 zinc finger spans residues 423–446; it reads FVCPECSKKFKRSEHLRRHIRSLH. A C2H2-type 2; atypical zinc finger spans residues 452-473; sequence FVCICGKRFSRRDNLRQHERLH.

Its subcellular location is the nucleus. Functionally, transcription factor that globally supports gene expression in response to hydrogen peroxide. The chain is Hydrogen peroxide stress regulator 1 (hsr1) from Schizosaccharomyces pombe (strain 972 / ATCC 24843) (Fission yeast).